Reading from the N-terminus, the 393-residue chain is MIGVSILGSTGSIGMSTLDVLARYPERYRVQALSANRSVAQIYQQCLQFRPSQVVMVDPDAAEQLRQRLHPVVPEIEVSSGSEALETIVTSPDTDYVMAAIVGAAGLLPTLAAARAGKRILLANKESLVMSGQLFMSAVSESGAELLPIDSEHNALWQCMPAEGRELPLHRKGVRRILLTASGGPFRERALSELDNVTPDEACAHPNWSMGRKISVDSATMMNKGLEVIEACWLFDAAACQIEVVLHPQSVIHSMVDYVDGSVLAQLGNPDMRTPIAYGLAWPERMESGVTLLDLFAIGQLTFCQPDLQRFPCLGLAYAALERGGTCSTILNAANEVAVQAFLDQRIQFTQIPKLIEWTLGRVTPTVADSLPAVLESDAVARQVAKEQVERWY.

Residues threonine 10, glycine 11, serine 12, isoleucine 13, arginine 37, and asparagine 124 each contribute to the NADPH site. Lysine 125 contacts 1-deoxy-D-xylulose 5-phosphate. Glutamate 126 contacts NADPH. Aspartate 150 lines the Mn(2+) pocket. Residues serine 151, glutamate 152, serine 182, and histidine 205 each contribute to the 1-deoxy-D-xylulose 5-phosphate site. A Mn(2+)-binding site is contributed by glutamate 152. Position 211 (glycine 211) interacts with NADPH. Residues serine 218, asparagine 223, lysine 224, and glutamate 227 each contribute to the 1-deoxy-D-xylulose 5-phosphate site. Glutamate 227 contributes to the Mn(2+) binding site.

This sequence belongs to the DXR family. Requires Mg(2+) as cofactor. The cofactor is Mn(2+).

The catalysed reaction is 2-C-methyl-D-erythritol 4-phosphate + NADP(+) = 1-deoxy-D-xylulose 5-phosphate + NADPH + H(+). It functions in the pathway isoprenoid biosynthesis; isopentenyl diphosphate biosynthesis via DXP pathway; isopentenyl diphosphate from 1-deoxy-D-xylulose 5-phosphate: step 1/6. In terms of biological role, catalyzes the NADPH-dependent rearrangement and reduction of 1-deoxy-D-xylulose-5-phosphate (DXP) to 2-C-methyl-D-erythritol 4-phosphate (MEP). This chain is 1-deoxy-D-xylulose 5-phosphate reductoisomerase, found in Nitrosococcus oceani (strain ATCC 19707 / BCRC 17464 / JCM 30415 / NCIMB 11848 / C-107).